Here is a 385-residue protein sequence, read N- to C-terminus: uncharacterized protein (385 aa).

Zn(2+)-binding residues include aspartate 180, histidine 258, and histidine 275.

It belongs to the iron-containing alcohol dehydrogenase family. Requires Zn(2+) as cofactor.

This is an uncharacterized protein from Synechocystis sp. (strain ATCC 27184 / PCC 6803 / Kazusa).